The primary structure comprises 160 residues: Small ribosomal subunit protein uS19 (160 aa).

This sequence belongs to the universal ribosomal protein uS19 family.

In terms of biological role, protein S19 forms a complex with S13 that binds strongly to the 16S ribosomal RNA. The protein is Small ribosomal subunit protein uS19 of Pyrobaculum islandicum (strain DSM 4184 / JCM 9189 / GEO3).